Consider the following 152-residue polypeptide: Melatonin receptor type 1B (152 aa).

The Cytoplasmic segment spans residues histidine 1 to tryptophan 12. The helical transmembrane segment at asparagine 13–phenylalanine 33 threads the bilayer. Over phenylalanine 34–tyrosine 57 the chain is Extracellular. The chain crosses the membrane as a helical span at residues threonine 58 to leucine 78. The Cytoplasmic portion of the chain corresponds to arginine 79–methionine 110. Residues phenylalanine 111 to valine 131 traverse the membrane as a helical segment. Residues serine 132–glutamate 144 are Extracellular-facing. Residues tryptophan 145 to phenylalanine 152 traverse the membrane as a helical segment.

The protein belongs to the G-protein coupled receptor 1 family.

It localises to the cell membrane. Functionally, high affinity receptor for melatonin. The activity of this receptor is mediated by pertussis toxin sensitive G proteins that inhibits adenylate cyclase activity. The sequence is that of Melatonin receptor type 1B (mtnr1b) from Xenopus laevis (African clawed frog).